Consider the following 273-residue polypeptide: MENRKNYFHLHLISDSTGETLIAAGRAAAAQFQSSHALEHVYPLIRNRKQLMQVMEAVDGAPGIVLYTIVDRELAGLIDQRCREIGVPCVSVLDPIIELFQSYLGSPSRRRSGAQHVMDAEYFARIEALNFTMDHDDGQIPADFDEADVVLVGVSRTSKTPTSIYLANRGIKTANIPIVPGVSLPEGLLTATKPLIVGLIASAERLSQVRQHRVLGTTQSFHGEDYTDRAAIAEELKYARSLCARNNWPLIDVTRRSIEETAAAIVALRPRLR.

An ADP-binding site is contributed by 153 to 160 (GVSRTSKT).

The protein belongs to the pyruvate, phosphate/water dikinase regulatory protein family. PDRP subfamily.

The catalysed reaction is N(tele)-phospho-L-histidyl/L-threonyl-[pyruvate, phosphate dikinase] + ADP = N(tele)-phospho-L-histidyl/O-phospho-L-threonyl-[pyruvate, phosphate dikinase] + AMP + H(+). It carries out the reaction N(tele)-phospho-L-histidyl/O-phospho-L-threonyl-[pyruvate, phosphate dikinase] + phosphate + H(+) = N(tele)-phospho-L-histidyl/L-threonyl-[pyruvate, phosphate dikinase] + diphosphate. In terms of biological role, bifunctional serine/threonine kinase and phosphorylase involved in the regulation of the pyruvate, phosphate dikinase (PPDK) by catalyzing its phosphorylation/dephosphorylation. The polypeptide is Putative pyruvate, phosphate dikinase regulatory protein (Sinorhizobium medicae (strain WSM419) (Ensifer medicae)).